Reading from the N-terminus, the 840-residue chain is Sorting nexin-25 (840 aa).

One can recognise a PXA domain in the interval 1–164 (MDKALKEVFD…MLLAQLAYRE (164 aa)). The region spanning 287-401 (QFEDILANTF…IVSDLYEKLL (115 aa)) is the RGS domain. Residues 434–499 (TNQINEQASF…RTDLQLHMAR (66 aa)) adopt a coiled-coil conformation. Residues 508 to 628 (GMWKASITSG…AFLSPSPDYL (121 aa)) form the PX domain. S665 carries the post-translational modification Phosphoserine.

It belongs to the sorting nexin family.

Its subcellular location is the endosome membrane. May be involved in several stages of intracellular trafficking. The protein is Sorting nexin-25 (SNX25) of Homo sapiens (Human).